The following is a 354-amino-acid chain: Fructose-bisphosphate aldolase (354 aa).

A D-glyceraldehyde 3-phosphate-binding site is contributed by Ser50. Asp83 serves as the catalytic Proton donor. Zn(2+) is bound by residues His84, Asp105, Glu142, and His198. A dihydroxyacetone phosphate-binding site is contributed by Gly199. His232 serves as a coordination point for Zn(2+). Dihydroxyacetone phosphate-binding positions include 233 to 235 (GSS) and 275 to 278 (NIDT).

This sequence belongs to the class II fructose-bisphosphate aldolase family. As to quaternary structure, homodimer. Zn(2+) is required as a cofactor.

The enzyme catalyses beta-D-fructose 1,6-bisphosphate = D-glyceraldehyde 3-phosphate + dihydroxyacetone phosphate. It functions in the pathway carbohydrate biosynthesis; Calvin cycle. It participates in carbohydrate degradation; glycolysis; D-glyceraldehyde 3-phosphate and glycerone phosphate from D-glucose: step 4/4. Its activity is regulated as follows. Activity is stimulated by Fe(2+) in autotrophically grown cells. Functionally, catalyzes the aldol condensation of dihydroxyacetone phosphate (DHAP or glycerone-phosphate) with glyceraldehyde 3-phosphate (G3P) to form fructose 1,6-bisphosphate (FBP) in gluconeogenesis and the reverse reaction in glycolysis. The polypeptide is Fructose-bisphosphate aldolase (Xanthobacter flavus).